We begin with the raw amino-acid sequence, 85 residues long: Contulakin-Lt1 (85 aa).

Residues 1–22 (MRTAYWVMVMMMVGITAPLSEG) form the signal peptide. Residues 23-60 (RKLNDAIRGLVADYLTPQLLQSLVSAPYPEFQLDDPNL) constitute a propeptide that is removed on maturation. Cysteine 65 and cysteine 70 are oxidised to a cystine. Residues 76 to 85 (RRRDLKKRNK) constitute a propeptide that is removed on maturation.

The protein belongs to the conotoxin C superfamily. Expressed by the venom duct.

It localises to the secreted. Acts as an agonist of neurotensin receptors. It binds to human neurotensin type 1 receptor (NTSR1), rat neurotensin types 1 and 2 receptors (NTSR1/NTSR2) and mouse neurotensin type 3 receptor (SORT1). This Conus litteratus (Lettered cone) protein is Contulakin-Lt1.